We begin with the raw amino-acid sequence, 328 residues long: UPF0421 protein SSP0904 (328 aa).

4 helical membrane passes run 26 to 46 (LFCL…IVTI), 61 to 81 (LPAT…FGDQ), 84 to 104 (FAYA…NLHV), and 132 to 152 (LLTA…ILPP).

The protein belongs to the UPF0421 family.

The protein resides in the cell membrane. The protein is UPF0421 protein SSP0904 of Staphylococcus saprophyticus subsp. saprophyticus (strain ATCC 15305 / DSM 20229 / NCIMB 8711 / NCTC 7292 / S-41).